Reading from the N-terminus, the 321-residue chain is Glycerol-3-phosphate phosphatase (321 aa).

Catalysis depends on Asp34, which acts as the Nucleophile. Mg(2+) contacts are provided by Asp34, Asp36, and Asp260. The active-site Proton donor is the Asp36.

This sequence belongs to the HAD-like hydrolase superfamily. CbbY/CbbZ/Gph/YieH family. In terms of assembly, homodimer. It depends on Mg(2+) as a cofactor. As to expression, detected in all tissues including red cells, lymphocytes and cultured fibroblasts (at protein level). The highest activities occur in skeletal muscle and cardiac muscle.

It catalyses the reaction O-phospho-L-tyrosyl-[protein] + H2O = L-tyrosyl-[protein] + phosphate. It carries out the reaction sn-glycerol 1-phosphate + H2O = glycerol + phosphate. The enzyme catalyses sn-glycerol 3-phosphate + H2O = glycerol + phosphate. Glycerol-3-phosphate phosphatase hydrolyzing glycerol-3-phosphate into glycerol. Thereby, regulates the cellular levels of glycerol-3-phosphate a metabolic intermediate of glucose, lipid and energy metabolism. Was also shown to have a 2-phosphoglycolate phosphatase activity and a tyrosine-protein phosphatase activity. However, their physiological relevance is unclear. In vitro, also has a phosphatase activity toward ADP, ATP, GDP and GTP. The chain is Glycerol-3-phosphate phosphatase from Homo sapiens (Human).